The sequence spans 487 residues: Protein nucleotidyltransferase YdiU (487 aa).

ATP contacts are provided by Gly91, Gly93, Arg94, Lys114, Asp126, Gly127, Arg177, and Arg184. Catalysis depends on Asp253, which acts as the Proton acceptor. Mg(2+) is bound by residues Asn254 and Asp263. An ATP-binding site is contributed by Asp263.

This sequence belongs to the SELO family. It depends on Mg(2+) as a cofactor. Mn(2+) serves as cofactor.

It catalyses the reaction L-seryl-[protein] + ATP = 3-O-(5'-adenylyl)-L-seryl-[protein] + diphosphate. The enzyme catalyses L-threonyl-[protein] + ATP = 3-O-(5'-adenylyl)-L-threonyl-[protein] + diphosphate. The catalysed reaction is L-tyrosyl-[protein] + ATP = O-(5'-adenylyl)-L-tyrosyl-[protein] + diphosphate. It carries out the reaction L-histidyl-[protein] + UTP = N(tele)-(5'-uridylyl)-L-histidyl-[protein] + diphosphate. It catalyses the reaction L-seryl-[protein] + UTP = O-(5'-uridylyl)-L-seryl-[protein] + diphosphate. The enzyme catalyses L-tyrosyl-[protein] + UTP = O-(5'-uridylyl)-L-tyrosyl-[protein] + diphosphate. In terms of biological role, nucleotidyltransferase involved in the post-translational modification of proteins. It can catalyze the addition of adenosine monophosphate (AMP) or uridine monophosphate (UMP) to a protein, resulting in modifications known as AMPylation and UMPylation. This Yersinia pestis (strain Pestoides F) protein is Protein nucleotidyltransferase YdiU.